The following is a 363-amino-acid chain: S-adenosylmethionine:tRNA ribosyltransferase-isomerase (363 aa).

The protein belongs to the QueA family. As to quaternary structure, monomer.

The protein localises to the cytoplasm. The catalysed reaction is 7-aminomethyl-7-carbaguanosine(34) in tRNA + S-adenosyl-L-methionine = epoxyqueuosine(34) in tRNA + adenine + L-methionine + 2 H(+). The protein operates within tRNA modification; tRNA-queuosine biosynthesis. Its function is as follows. Transfers and isomerizes the ribose moiety from AdoMet to the 7-aminomethyl group of 7-deazaguanine (preQ1-tRNA) to give epoxyqueuosine (oQ-tRNA). In Haemophilus influenzae (strain PittGG), this protein is S-adenosylmethionine:tRNA ribosyltransferase-isomerase.